Consider the following 125-residue polypeptide: S-adenosylmethionine decarboxylase proenzyme (125 aa).

Catalysis depends on S71, which acts as the Schiff-base intermediate with substrate; via pyruvic acid. S71 carries the post-translational modification Pyruvic acid (Ser); by autocatalysis. H76 functions as the Proton acceptor; for processing activity in the catalytic mechanism. C91 acts as the Proton donor; for catalytic activity in catalysis.

It belongs to the prokaryotic AdoMetDC family. Type 1 subfamily. Heterotetramer of two alpha and two beta chains arranged as a dimer of alpha/beta heterodimers. Requires pyruvate as cofactor. Is synthesized initially as an inactive proenzyme. Formation of the active enzyme involves a self-maturation process in which the active site pyruvoyl group is generated from an internal serine residue via an autocatalytic post-translational modification. Two non-identical subunits are generated from the proenzyme in this reaction, and the pyruvate is formed at the N-terminus of the alpha chain, which is derived from the carboxyl end of the proenzyme. The post-translation cleavage follows an unusual pathway, termed non-hydrolytic serinolysis, in which the side chain hydroxyl group of the serine supplies its oxygen atom to form the C-terminus of the beta chain, while the remainder of the serine residue undergoes an oxidative deamination to produce ammonia and the pyruvoyl group blocking the N-terminus of the alpha chain.

It catalyses the reaction S-adenosyl-L-methionine + H(+) = S-adenosyl 3-(methylsulfanyl)propylamine + CO2. The protein operates within amine and polyamine biosynthesis; S-adenosylmethioninamine biosynthesis; S-adenosylmethioninamine from S-adenosyl-L-methionine: step 1/1. In terms of biological role, catalyzes the decarboxylation of S-adenosylmethionine to S-adenosylmethioninamine (dcAdoMet), the propylamine donor required for the synthesis of the polyamines spermine and spermidine from the diamine putrescine. In Pyrobaculum arsenaticum (strain DSM 13514 / JCM 11321 / PZ6), this protein is S-adenosylmethionine decarboxylase proenzyme.